Consider the following 151-residue polypeptide: UPF0756 membrane protein Aflv_0503 (151 aa).

A run of 4 helical transmembrane segments spans residues 4-24 (FIFL…SLII), 52-72 (LGVT…KIGF), 85-105 (WIAM…VALL), and 115-135 (LVLG…GPLI).

Belongs to the UPF0756 family.

It is found in the cell membrane. The protein is UPF0756 membrane protein Aflv_0503 of Anoxybacillus flavithermus (strain DSM 21510 / WK1).